The primary structure comprises 271 residues: N-acetyltransferase ECO1 (271 aa).

The CCHH-type zinc finger occupies Val26–His50. An N-acetyltransferase domain is found at Val109 to Ile271.

Belongs to the acetyltransferase family. ECO subfamily.

It localises to the nucleus. In terms of biological role, probable acetyltransferase required for the establishment of sister chromatid cohesion and couple the processes of cohesion and DNA replication to ensure that only sister chromatids become paired together. In contrast to the structural cohesins, the deposition and establishment factors are required only during S phase. Acts by acetylating the cohesin complex component SMC3. This chain is N-acetyltransferase ECO1 (ECO1), found in Kluyveromyces lactis (strain ATCC 8585 / CBS 2359 / DSM 70799 / NBRC 1267 / NRRL Y-1140 / WM37) (Yeast).